We begin with the raw amino-acid sequence, 264 residues long: SPRY domain-containing SOCS box protein 2 (264 aa).

Polar residues predominate over residues 1–19; that stretch reads MGQTALARGSSSTPTSQAL. The disordered stretch occupies residues 1–34; it reads MGQTALARGSSSTPTSQALYSDFSPPEGLEELLS. The B30.2/SPRY domain occupies 26-221; sequence PEGLEELLSA…VRIRYMGERR (196 aa). Residues 222–264 enclose the SOCS box domain; sequence VEEPQSLLHLSRLCVRHALGDTRLGQISTLPLPPAMKRYLLYK.

It belongs to the SPSB family. As to quaternary structure, component of the probable ECS(SPSB2) E3 ubiquitin-protein ligase complex which contains CUL5, RNF7/RBX2, Elongin BC complex and SPSB2. Interacts with CUL5, RNF7, ELOB and ELOC. Interacts with MET. Interacts (via B30.2/SPRY domain) with PAWR; this interaction occurs in association with the Elongin BC complex. Interacts with NOS2.

It localises to the cytoplasm. The protein resides in the cytosol. It functions in the pathway protein modification; protein ubiquitination. Its function is as follows. Substrate recognition component of a SCF-like ECS (Elongin BC-CUL2/5-SOCS-box protein) E3 ubiquitin-protein ligase complex which mediates the ubiquitination and subsequent proteasomal degradation of target proteins. Negatively regulates nitric oxide (NO) production and limits cellular toxicity in activated macrophages by mediating the ubiquitination and proteasomal degradation of NOS2. Acts as a bridge which links NOS2 with the ECS E3 ubiquitin ligase complex components ELOC and CUL5. The sequence is that of SPRY domain-containing SOCS box protein 2 (Spsb2) from Mus musculus (Mouse).